The primary structure comprises 271 residues: Aquaporin-11 (271 aa).

The Cytoplasmic segment spans residues 1 to 14 (MSALLGLRPEVQDT). The helical transmembrane segment at 15–35 (CISLGLMLLFVLFVGLARVIA) threads the bilayer. Residues 36–41 (RQQLHR) are Lumenal-facing. The chain crosses the membrane as a helical span at residues 42-62 (PVVHAFVLEFLATFQLCCCTH). Residues 63–76 (ELQVLSEQDSAHPT) lie on the Cytoplasmic side of the membrane. A helical membrane pass occupies residues 77–97 (WTLTLIYFFSLVHGLTLVGTA). At 98–166 (SNPCGVMMQM…NPIHTDMSKA (69 aa)) the chain is on the lumenal side. The short motif at 99–101 (NPC) is the NPC element. Residues 167 to 187 (IIIEAICSFIFHSALLHFQEV) traverse the membrane as a helical segment. Residues 188-194 (RTKLRIH) lie on the Cytoplasmic side of the membrane. A helical transmembrane segment spans residues 195–215 (LLAALITFLAYAGGSLTGALF). The NPA motif lies at 216 to 218 (NPA). Residues 216-234 (NPALALSLHFPCFDELFYK) lie on the Lumenal side of the membrane. Residues 235-255 (FFVVYWLAPSVGVLMMILMFS) form a helical membrane-spanning segment. At 256 to 271 (FFLPWLHNNQMTNKKE) the chain is on the cytoplasmic side.

It belongs to the MIP/aquaporin (TC 1.A.8) family. AQP11/AQP12 subfamily. In terms of assembly, homodimer; disulfide-linked. Homotetramer. Can also form homomultimer. In terms of processing, not glycosylated. As to expression, highly expressed in the S1 proximal tubule segment,. Expressed in the testis, kidney, and liver. Weakly expressed in the heart, brain, and muscle. Highly expressed in the testis. Expressed in the proximal tubule of the cortex of 8-day-old mouse kidney. Expressed in retina specifically at retinal Mueller glial cells. Expressed in brain. Expressed abundantly at the choroid plexus but also expressed weakly in the parenchyma. Expressed at the capillary endothelium in the cerebral white matter. Expressed in adult testis, in the elongated spermatids (ES) and in residual bodies inside Sertoli cells.

It localises to the endoplasmic reticulum membrane. The protein localises to the cytoplasmic vesicle membrane. The protein resides in the cell membrane. It catalyses the reaction H2O(in) = H2O(out). It carries out the reaction glycerol(in) = glycerol(out). The catalysed reaction is H2O2(out) = H2O2(in). Channel protein that facilitates the transport of water, glycerol and hydrogen peroxide across membrane of cell or organelles guaranteeing intracellular homeostasis in several organes like liver, kidney and brain. In situation of stress, participates in endoplasmic reticulum (ER) homeostasis by regulating redox homeostasis through the transport of hydrogen peroxide across the endoplasmic reticulum membrane thereby regulating the oxidative stress through the NADPH oxidase 2 pathway. Plays a role by maintaining an environment suitable for translation or protein foldings in the ER lumen namely by participating in the PKD1 glycosylation processing resulting in regulation of PKD1 membrane trafficking thereby preventing the accumulation of unfolding protein in ER. Plays a role in the proximal tubule function by regulating its endosomal acidification. May play a role in postnatal kidney development. The sequence is that of Aquaporin-11 from Mus musculus (Mouse).